A 481-amino-acid polypeptide reads, in one-letter code: Aspartyl/glutamyl-tRNA(Asn/Gln) amidotransferase subunit B (481 aa).

It belongs to the GatB/GatE family. GatB subfamily. As to quaternary structure, heterotrimer of A, B and C subunits.

It catalyses the reaction L-glutamyl-tRNA(Gln) + L-glutamine + ATP + H2O = L-glutaminyl-tRNA(Gln) + L-glutamate + ADP + phosphate + H(+). The catalysed reaction is L-aspartyl-tRNA(Asn) + L-glutamine + ATP + H2O = L-asparaginyl-tRNA(Asn) + L-glutamate + ADP + phosphate + 2 H(+). Functionally, allows the formation of correctly charged Asn-tRNA(Asn) or Gln-tRNA(Gln) through the transamidation of misacylated Asp-tRNA(Asn) or Glu-tRNA(Gln) in organisms which lack either or both of asparaginyl-tRNA or glutaminyl-tRNA synthetases. The reaction takes place in the presence of glutamine and ATP through an activated phospho-Asp-tRNA(Asn) or phospho-Glu-tRNA(Gln). This Pseudomonas fluorescens (strain SBW25) protein is Aspartyl/glutamyl-tRNA(Asn/Gln) amidotransferase subunit B.